Consider the following 413-residue polypeptide: Calsequestrin-2 (413 aa).

A signal peptide spans methionine 1–alanine 19. Tyrosine 282 carries the phosphotyrosine modification. Asparagine 335 carries an N-linked (GlcNAc...) asparagine glycan. The segment at valine 365–glutamate 413 is disordered. Acidic residues predominate over residues glutamate 373 to glutamate 413. Residues serine 398 and serine 405 each carry the phosphoserine modification.

The protein belongs to the calsequestrin family. In terms of assembly, monomer, homodimer and homooligomer. Mostly monomeric in the absence of calcium. Forms higher oligomers in a calcium-dependent manner. Dimers associate to form tetramers, that then form linear homomer chains. Interacts with ASPH and TRDN. Post-translationally, phosphorylation in the C-terminus, probably by CK2, moderately increases calcium buffering capacity. N-glycosylated. In terms of tissue distribution, detected in stomach and vas deferens (at protein level).

Its subcellular location is the sarcoplasmic reticulum lumen. Functionally, calsequestrin is a high-capacity, moderate affinity, calcium-binding protein and thus acts as an internal calcium store in muscle. Calcium ions are bound by clusters of acidic residues at the protein surface, especially at the interface between subunits. Can bind around 60 Ca(2+) ions. Regulates the release of lumenal Ca(2+) via the calcium release channel RYR2; this plays an important role in triggering muscle contraction. Plays a role in excitation-contraction coupling in the heart and in regulating the rate of heart beats. The sequence is that of Calsequestrin-2 (Casq2) from Rattus norvegicus (Rat).